We begin with the raw amino-acid sequence, 670 residues long: Solute carrier organic anion transporter family member 1A4 (670 aa).

Over 1–20 (MGKSEKEVATHGVRCFSKIK) the chain is Cytoplasmic. A helical transmembrane segment spans residues 21–40 (AFLLALTCAYVSKSLSGTYM). The Extracellular portion of the chain corresponds to 41 to 59 (NSMLTQIERQFGIPTSVVG). Residues 60–80 (LINGSFEIGNLLLIIFVSYFG) traverse the membrane as a helical segment. The Cytoplasmic portion of the chain corresponds to 81–86 (TKLHRP). Residues 87–111 (IMIGVGCAVMGLGCFLISIPHFLMG) form a helical membrane-spanning segment. Residues 112–155 (RYEYETTILPTSNLSSNSFVCTENRTQTLKPTQDPTECVKEMKS) are Extracellular-facing. Asn124 and Asn135 each carry an N-linked (GlcNAc...) asparagine glycan. A helical membrane pass occupies residues 156-184 (LMWIYVLVGNIIRGMGETPIMPLGISYIE). Topologically, residues 185 to 203 (DFAKSENSPLYIGILETGM) are cytoplasmic. A helical membrane pass occupies residues 204–224 (TIGPLIGLLLGSSCANIYVDT). At 225 to 242 (GSVNTDDLTITPTDTRWV) the chain is on the extracellular side. Residues 243 to 267 (GAWWIGFLVCAGVNILTSIPFFFFP) form a helical membrane-spanning segment. Over 268–311 (KTLLKEGLQDNGDGTENAKEEKHREKIKEENRGITKDFFLFMKS) the chain is Cytoplasmic. The chain crosses the membrane as a helical span at residues 312 to 333 (LSCNPIYMIFILISVIQVNAFI). Topologically, residues 334–353 (NSFTFMPKYLEQQYGKSTAE) are extracellular. The chain crosses the membrane as a helical span at residues 354–377 (IVFLMGLYMLPPICLGYLIGGLIM). The Cytoplasmic portion of the chain corresponds to 378–381 (KKFK). The helical transmembrane segment at 382 to 405 (ITVKKAAYIGFWLSLTEYLLSFVS) threads the bilayer. Residues 406–513 (YIMTCDNFPV…PECANKLQYF (108 aa)) are Extracellular-facing. The region spanning 433–488 (NNVLADCNTKCSCLTNTWDPVCGDNGLSYMSACLAGCEKSVGTGTNMVFQNCSCIQ) is the Kazal-like domain. Cystine bridges form between Cys439–Cys469, Cys445–Cys465, and Cys454–Cys486. 2 N-linked (GlcNAc...) asparagine glycosylation sites follow: Asn483 and Asn492. Residues 514–536 (LIISIIGCFIFSLGAIPGYMVLL) traverse the membrane as a helical segment. At 537 to 545 (RCMKSEEKS) the chain is on the cytoplasmic side. A helical transmembrane segment spans residues 546–571 (LGVGLHTFCMRILGGIPAPIYFGALI). Residues 572–605 (DRTCLHWGTLKCGEPGACRMYDINSFRRIYLGLP) are Extracellular-facing. A helical membrane pass occupies residues 606-623 (AALRGASFLPALFILILM). Topologically, residues 624–670 (RKFQFPGDIDSSDTDPAEMKLTAKESKCTNVHRSPTMQNDGERKTKL) are cytoplasmic. Residues Ser634 and Ser635 each carry the phosphoserine modification. The interval 649–670 (SKCTNVHRSPTMQNDGERKTKL) is disordered. Residues 651–662 (CTNVHRSPTMQN) are compositionally biased toward polar residues.

Belongs to the organo anion transporter (TC 2.A.60) family. Highly expressed in brain and liver. Detected at very low levels in heart and lung.

The protein resides in the cell membrane. The enzyme catalyses estrone 3-sulfate(out) = estrone 3-sulfate(in). It catalyses the reaction taurocholate(out) = taurocholate(in). It carries out the reaction prostaglandin E2(out) = prostaglandin E2(in). The catalysed reaction is L-thyroxine(out) = L-thyroxine(in). Mediates the Na(+)-independent transport of organic anions such as taurocholate, cholate, 17-beta-glucuronosyl estradiol, prostaglandin E2, estrone 3-sulfate, L-thyroxine (T4), the cardiac glycosides ouabain and digoxin and thyroid hormones. Shows a pH-sensitive substrate specificity which may be ascribed to the protonation state of the binding site and leads to a stimulation of substrate transport in an acidic microenvironment. Hydrogencarbonate/HCO3(-) acts as the probable counteranion that exchanges for organic anions. In Mus musculus (Mouse), this protein is Solute carrier organic anion transporter family member 1A4 (Slco1a4).